Consider the following 316-residue polypeptide: 4-amino-5-hydroxymethyl-2-methylpyrimidine phosphate synthase (316 aa).

Position 66 is an N6-(pyridoxal phosphate)lysine (Lys-66). Residue His-70 is part of the active site. 118–121 (GEFG) contributes to the pyridoxal 5'-phosphate binding site. The CCCFC; essential for catalytic activity, may be the site of iron coordination signature appears at 191-195 (CCCFC).

It belongs to the NMT1/THI5 family. As to quaternary structure, homodimer. The cofactor is Fe cation.

It catalyses the reaction N(6)-(pyridoxal phosphate)-L-lysyl-[4-amino-5-hydroxymethyl-2-methylpyrimidine phosphate synthase] + L-histidyl-[4-amino-5-hydroxymethyl-2-methylpyrimidine phosphate synthase] + 2 Fe(3+) + 4 H2O = L-lysyl-[4-amino-5-hydroxymethyl-2-methylpyrimidine phosphate synthase] + (2S)-2-amino-5-hydroxy-4-oxopentanoyl-[4-amino-5-hydroxymethyl-2-methylpyrimidine phosphate synthase] + 4-amino-2-methyl-5-(phosphooxymethyl)pyrimidine + 3-oxopropanoate + 2 Fe(2+) + 2 H(+). It functions in the pathway cofactor biosynthesis; thiamine diphosphate biosynthesis. Its function is as follows. Responsible for the formation of the pyrimidine heterocycle in the thiamine biosynthesis pathway. Catalyzes the formation of hydroxymethylpyrimidine phosphate (HMP-P) from histidine and pyridoxal phosphate (PLP). The protein uses PLP and the active site histidine to form HMP-P, generating an inactive enzyme. The enzyme can only undergo a single turnover, which suggests it is a suicide enzyme. This Legionella pneumophila subsp. pneumophila (strain Philadelphia 1 / ATCC 33152 / DSM 7513) protein is 4-amino-5-hydroxymethyl-2-methylpyrimidine phosphate synthase.